Consider the following 243-residue polypeptide: UPF0173 metal-dependent hydrolase Xaut_3786 (243 aa).

Belongs to the UPF0173 family.

The polypeptide is UPF0173 metal-dependent hydrolase Xaut_3786 (Xanthobacter autotrophicus (strain ATCC BAA-1158 / Py2)).